The following is a 148-amino-acid chain: ATP synthase epsilon chain (148 aa).

This sequence belongs to the ATPase epsilon chain family. As to quaternary structure, F-type ATPases have 2 components, CF(1) - the catalytic core - and CF(0) - the membrane proton channel. CF(1) has five subunits: alpha(3), beta(3), gamma(1), delta(1), epsilon(1). CF(0) has three main subunits: a, b and c.

The protein resides in the cell membrane. Its function is as follows. Produces ATP from ADP in the presence of a proton gradient across the membrane. This is ATP synthase epsilon chain from Streptococcus thermophilus (strain ATCC BAA-250 / LMG 18311).